The primary structure comprises 98 residues: Biogenesis of lysosome-related organelles complex 1 subunit SNN1 (98 aa).

Residues 55–98 (MDEQELLQEEGSLKEELARVNQLKKRLDKLTELYAELARKCGAL) adopt a coiled-coil conformation.

Belongs to the SNAPIN family. As to quaternary structure, component of the biogenesis of lysosome-related organelles complex-1 (BLOC-1).

The protein resides in the endosome. Functionally, component of the biogenesis of lysosome-related organelles complex-1 (BLOC-1), a complex involved in endosomal cargo sorting. In Eremothecium gossypii (strain ATCC 10895 / CBS 109.51 / FGSC 9923 / NRRL Y-1056) (Yeast), this protein is Biogenesis of lysosome-related organelles complex 1 subunit SNN1 (SNN1).